We begin with the raw amino-acid sequence, 137 residues long: Large ribosomal subunit protein uL16 (137 aa).

Basic residues predominate over residues methionine 1–alanine 21. The interval methionine 1–glutamine 22 is disordered.

It belongs to the universal ribosomal protein uL16 family. Part of the 50S ribosomal subunit.

Its function is as follows. Binds 23S rRNA and is also seen to make contacts with the A and possibly P site tRNAs. The chain is Large ribosomal subunit protein uL16 from Maridesulfovibrio salexigens (strain ATCC 14822 / DSM 2638 / NCIMB 8403 / VKM B-1763) (Desulfovibrio salexigens).